Consider the following 397-residue polypeptide: Tryptophan synthase beta chain (397 aa).

K88 carries the N6-(pyridoxal phosphate)lysine modification.

It belongs to the TrpB family. In terms of assembly, tetramer of two alpha and two beta chains. Pyridoxal 5'-phosphate is required as a cofactor.

It carries out the reaction (1S,2R)-1-C-(indol-3-yl)glycerol 3-phosphate + L-serine = D-glyceraldehyde 3-phosphate + L-tryptophan + H2O. Its pathway is amino-acid biosynthesis; L-tryptophan biosynthesis; L-tryptophan from chorismate: step 5/5. Functionally, the beta subunit is responsible for the synthesis of L-tryptophan from indole and L-serine. The chain is Tryptophan synthase beta chain from Haemophilus influenzae (strain 86-028NP).